The chain runs to 189 residues: Small ribosomal subunit protein uS5 (189 aa).

An S5 DRBM domain is found at 22–85 (FVDKLVAINR…EAAKRELIFV (64 aa)).

The protein belongs to the universal ribosomal protein uS5 family. In terms of assembly, part of the 30S ribosomal subunit. Contacts proteins S4 and S8.

In terms of biological role, with S4 and S12 plays an important role in translational accuracy. Located at the back of the 30S subunit body where it stabilizes the conformation of the head with respect to the body. The protein is Small ribosomal subunit protein uS5 of Rhizobium johnstonii (strain DSM 114642 / LMG 32736 / 3841) (Rhizobium leguminosarum bv. viciae).